A 278-amino-acid polypeptide reads, in one-letter code: Shikimate dehydrogenase (NADP(+)) (278 aa).

Shikimate-binding positions include 23-25 and T70; that span reads SRS. The active-site Proton acceptor is the K74. Residue E86 participates in NADP(+) binding. 2 residues coordinate shikimate: N95 and D110. Residues 135–139, 159–164, and M224 each bind NADP(+); these read GAGGA and NRTKEK. Position 226 (Y226) interacts with shikimate. G248 contacts NADP(+).

It belongs to the shikimate dehydrogenase family. Homodimer.

The enzyme catalyses shikimate + NADP(+) = 3-dehydroshikimate + NADPH + H(+). The protein operates within metabolic intermediate biosynthesis; chorismate biosynthesis; chorismate from D-erythrose 4-phosphate and phosphoenolpyruvate: step 4/7. Functionally, involved in the biosynthesis of the chorismate, which leads to the biosynthesis of aromatic amino acids. Catalyzes the reversible NADPH linked reduction of 3-dehydroshikimate (DHSA) to yield shikimate (SA). The protein is Shikimate dehydrogenase (NADP(+)) of Alcanivorax borkumensis (strain ATCC 700651 / DSM 11573 / NCIMB 13689 / SK2).